Consider the following 669-residue polypeptide: DNA ligase 2 (669 aa).

Residues 35-39 (DKEYD) and 83-84 (SL) contribute to the NAD(+) site. K125 (N6-AMP-lysine intermediate) is an active-site residue. NAD(+)-binding residues include R147, E181, and K317. Residues C410, C413, C426, and C432 each contribute to the Zn(2+) site. Positions 590–669 (VVENAFTGKT…EEFEQLINNM (80 aa)) constitute a BRCT domain.

This sequence belongs to the NAD-dependent DNA ligase family. LigA subfamily. The cofactor is Mg(2+). Requires Mn(2+) as cofactor.

It carries out the reaction NAD(+) + (deoxyribonucleotide)n-3'-hydroxyl + 5'-phospho-(deoxyribonucleotide)m = (deoxyribonucleotide)n+m + AMP + beta-nicotinamide D-nucleotide.. In terms of biological role, DNA ligase that catalyzes the formation of phosphodiester linkages between 5'-phosphoryl and 3'-hydroxyl groups in double-stranded DNA using NAD as a coenzyme and as the energy source for the reaction. It is essential for DNA replication and repair of damaged DNA. In Clostridium acetobutylicum (strain ATCC 824 / DSM 792 / JCM 1419 / IAM 19013 / LMG 5710 / NBRC 13948 / NRRL B-527 / VKM B-1787 / 2291 / W), this protein is DNA ligase 2.